A 283-amino-acid polypeptide reads, in one-letter code: MTVKEYAGELGISKRLLTDIKFGGGDLQINGEHVTVKYVLKEGDLLIVKFPEEQVSETLLAEPVPLDILYEDEHVLVINKQPYVSSIPSREHPSGSIANGIIDHYQTTGVRATVHLVTRLDRDTSGIMLVAKHRFAHSILSSAQKNGLVKRRYAAVVHGRMAQMEGTVDAPIGRHPDSIIERTVTPDGQKAVTHFYVTCANDDMTSVALQLETGRTHQIRVHMSYLGHPLCGDTLYGGTRQEIGRQALHSEHLSFIHPLTQENMRFHAPLPQDMSKLIKGENH.

Asp121 is a catalytic residue.

Belongs to the pseudouridine synthase RluA family.

It carries out the reaction a uridine in RNA = a pseudouridine in RNA. This is an uncharacterized protein from Bacillus subtilis (strain 168).